We begin with the raw amino-acid sequence, 277 residues long: Pantothenate synthetase (277 aa).

26–33 (MGYLHQGH) lines the ATP pocket. Catalysis depends on histidine 33, which acts as the Proton donor. Glutamine 57 contacts (R)-pantoate. Beta-alanine is bound at residue glutamine 57. 143 to 146 (GQKD) lines the ATP pocket. Glutamine 149 provides a ligand contact to (R)-pantoate. ATP-binding positions include valine 172 and 180–183 (LSSR).

This sequence belongs to the pantothenate synthetase family. Homodimer.

The protein resides in the cytoplasm. It catalyses the reaction (R)-pantoate + beta-alanine + ATP = (R)-pantothenate + AMP + diphosphate + H(+). It functions in the pathway cofactor biosynthesis; (R)-pantothenate biosynthesis; (R)-pantothenate from (R)-pantoate and beta-alanine: step 1/1. Catalyzes the condensation of pantoate with beta-alanine in an ATP-dependent reaction via a pantoyl-adenylate intermediate. The polypeptide is Pantothenate synthetase (Chloroflexus aggregans (strain MD-66 / DSM 9485)).